A 428-amino-acid chain; its full sequence is Enolase (428 aa).

Q163 contributes to the (2R)-2-phosphoglycerate binding site. E205 functions as the Proton donor in the catalytic mechanism. Mg(2+) contacts are provided by D242, E285, and D312. K337, R366, S367, and K388 together coordinate (2R)-2-phosphoglycerate. Catalysis depends on K337, which acts as the Proton acceptor.

This sequence belongs to the enolase family. Mg(2+) serves as cofactor.

The protein localises to the cytoplasm. Its subcellular location is the secreted. It is found in the cell surface. It catalyses the reaction (2R)-2-phosphoglycerate = phosphoenolpyruvate + H2O. It participates in carbohydrate degradation; glycolysis; pyruvate from D-glyceraldehyde 3-phosphate: step 4/5. Functionally, catalyzes the reversible conversion of 2-phosphoglycerate (2-PG) into phosphoenolpyruvate (PEP). It is essential for the degradation of carbohydrates via glycolysis. The polypeptide is Enolase (Carboxydothermus hydrogenoformans (strain ATCC BAA-161 / DSM 6008 / Z-2901)).